A 212-amino-acid polypeptide reads, in one-letter code: Thymidylate kinase (212 aa).

Position 11–18 (11–18) interacts with ATP; the sequence is GIEGSGKT.

It belongs to the thymidylate kinase family.

The enzyme catalyses dTMP + ATP = dTDP + ADP. Its function is as follows. Phosphorylation of dTMP to form dTDP in both de novo and salvage pathways of dTTP synthesis. This is Thymidylate kinase from Buchnera aphidicola subsp. Baizongia pistaciae (strain Bp).